Reading from the N-terminus, the 364-residue chain is Dihydroorotate dehydrogenase (quinone) (364 aa).

FMN-binding positions include 61 to 65 (AGFDK) and Thr85. Residue Lys65 participates in substrate binding. A substrate-binding site is contributed by 110–114 (NRMGF). 2 residues coordinate FMN: Asn139 and Asn170. Position 170 (Asn170) interacts with substrate. Residue Ser173 is the Nucleophile of the active site. Asn175 contributes to the substrate binding site. Residues Lys214 and Ala242 each contribute to the FMN site. Position 243–244 (243–244 (NT)) interacts with substrate. FMN-binding positions include Gly266, Gly295, and 316-317 (YS).

Belongs to the dihydroorotate dehydrogenase family. Type 2 subfamily. As to quaternary structure, monomer. The cofactor is FMN.

It is found in the cell membrane. The enzyme catalyses (S)-dihydroorotate + a quinone = orotate + a quinol. It participates in pyrimidine metabolism; UMP biosynthesis via de novo pathway; orotate from (S)-dihydroorotate (quinone route): step 1/1. Catalyzes the conversion of dihydroorotate to orotate with quinone as electron acceptor. The chain is Dihydroorotate dehydrogenase (quinone) from Rhodopseudomonas palustris (strain HaA2).